Reading from the N-terminus, the 589-residue chain is ABC transporter G family member 8 (589 aa).

Residues Leu-16–Pro-261 form the ABC transporter domain. Residue Gly-62–Ser-69 participates in ATP binding. An ABC transmembrane type-2 domain is found at Thr-311 to Tyr-521. Transmembrane regions (helical) follow at residues Ala-335–Gly-355, Met-365–Ile-385, Val-412–Ile-432, Phe-441–Phe-461, Ile-470–Phe-490, Tyr-499–Asn-519, and Phe-560–Leu-580.

This sequence belongs to the ABC transporter superfamily. ABCG family. Eye pigment precursor importer (TC 3.A.1.204) subfamily.

It is found in the membrane. This chain is ABC transporter G family member 8 (ABCG8), found in Arabidopsis thaliana (Mouse-ear cress).